We begin with the raw amino-acid sequence, 1562 residues long: Pikromycin polyketide synthase component PikAIII (1562 aa).

Residues 34–464 enclose the Ketosynthase family 3 (KS3) domain; the sequence is HEPVAIVGMA…GTNAHVVLEE (431 aa). Positions 37 to 1475 are module 5; sequence VAIVGMACRL…TPAALAAHLH (1439 aa). C209 acts as the Acyl-thioester intermediate; for beta-ketoacyl synthase activity in catalysis. Catalysis depends on for beta-ketoacyl synthase activity residues H344 and H384. An acyltransferase region spans residues 565-866; sequence FVFPGQGTQW…GGQERLVTSL (302 aa). Catalysis depends on S655, which acts as the Acyl-ester intermediate; for acyltransferase activity. Residues 1116 to 1293 form a beta-ketoacyl reductase region; sequence GTVLITGGTG…ATSVAWGLWA (178 aa). Residues 1124–1127, 1147–1150, 1176–1177, K1226, and 1248–1249 contribute to the NADP(+) site; these read TGAL, SRSG, DV, and YS. Y1263 serves as the catalytic Acyl-ester intermediate; for beta-ketoacyl reductase activity. Residues 1403–1478 enclose the Carrier domain; sequence PALLTLVRTH…ALAAHLHEAY (76 aa). Residue S1438 is modified to O-(pantetheine 4'-phosphoryl)serine. The segment at 1519 to 1548 is disordered; that stretch reads GIEPEPGSGGSDGGAADPGAEPEASIDDLD. Over residues 1532–1541 the composition is skewed to low complexity; it reads GAADPGAEPE.

As to quaternary structure, homodimer. Pikromycin PKS consists of a combination of multimodular (PikAI and PikAII) and monomodular (PikAIII and PikAIV) polypeptides each coding for a functional synthase subunit which participates in 1 (monomodular) or 2 (multimodular) of the six FAS-like elongation steps required for formation of the polyketide. Module 1, 2, 3, 4, 5, and 6 participating in biosynthesis steps 1, 2, 3, 4, 5, and 6, respectively. It depends on pantetheine 4'-phosphate as a cofactor.

The enzyme catalyses 5 (S)-methylmalonyl-CoA + malonyl-CoA + 5 NADPH + 11 H(+) = 10-deoxymethynolide + 6 CO2 + 5 NADP(+) + 6 CoA + 2 H2O. It catalyses the reaction 6 (S)-methylmalonyl-CoA + malonyl-CoA + 5 NADPH + 12 H(+) = narbonolide + 7 CO2 + 5 NADP(+) + 7 CoA + 2 H2O. It functions in the pathway antibiotic biosynthesis. Its function is as follows. Involved in the biosynthesis of 12- and 14-membered ring macrolactone antibiotics such as methymycin and neomethymycin, and pikromycin and narbomycin, respectively. Component of the pikromycin PKS which catalyzes the biosynthesis of both precursors 10-deoxymethynolide (12-membered ring macrolactone) and narbonolide (14-membered ring macrolactone). Chain elongation through PikAI, PikAII and PikAIII followed by thioesterase catalyzed termination results in the production of 10-deoxymethynolide, while continued elongation through PikAIV, followed by thioesterase (TE) catalyzed cyclization results in the biosynthesis of the narbonolide. The sequence is that of Pikromycin polyketide synthase component PikAIII from Streptomyces venezuelae.